The sequence spans 126 residues: Putative esterase ComA2 (126 aa).

The protein belongs to the thioesterase PaaI family.

Its function is as follows. Is not required for competence. The sequence is that of Putative esterase ComA2 (yuxO) from Bacillus subtilis (strain 168).